A 127-amino-acid chain; its full sequence is UPF0102 protein Geob_1494 (127 aa).

This sequence belongs to the UPF0102 family.

The protein is UPF0102 protein Geob_1494 of Geotalea daltonii (strain DSM 22248 / JCM 15807 / FRC-32) (Geobacter daltonii).